The sequence spans 302 residues: Segregation and condensation protein A (302 aa).

The protein belongs to the ScpA family. Component of a cohesin-like complex composed of ScpA, ScpB and the Smc homodimer, in which ScpA and ScpB bind to the head domain of Smc. The presence of the three proteins is required for the association of the complex with DNA.

The protein resides in the cytoplasm. In terms of biological role, participates in chromosomal partition during cell division. May act via the formation of a condensin-like complex containing Smc and ScpB that pull DNA away from mid-cell into both cell halves. The chain is Segregation and condensation protein A from Xylella fastidiosa (strain Temecula1 / ATCC 700964).